The chain runs to 178 residues: Crossover junction endodeoxyribonuclease RuvC (178 aa).

Active-site residues include D20, E80, and D154. D20, E80, and D154 together coordinate Mg(2+).

It belongs to the RuvC family. As to quaternary structure, homodimer which binds Holliday junction (HJ) DNA. The HJ becomes 2-fold symmetrical on binding to RuvC with unstacked arms; it has a different conformation from HJ DNA in complex with RuvA. In the full resolvosome a probable DNA-RuvA(4)-RuvB(12)-RuvC(2) complex forms which resolves the HJ. Mg(2+) serves as cofactor.

The protein resides in the cytoplasm. It catalyses the reaction Endonucleolytic cleavage at a junction such as a reciprocal single-stranded crossover between two homologous DNA duplexes (Holliday junction).. In terms of biological role, the RuvA-RuvB-RuvC complex processes Holliday junction (HJ) DNA during genetic recombination and DNA repair. Endonuclease that resolves HJ intermediates. Cleaves cruciform DNA by making single-stranded nicks across the HJ at symmetrical positions within the homologous arms, yielding a 5'-phosphate and a 3'-hydroxyl group; requires a central core of homology in the junction. The consensus cleavage sequence is 5'-(A/T)TT(C/G)-3'. Cleavage occurs on the 3'-side of the TT dinucleotide at the point of strand exchange. HJ branch migration catalyzed by RuvA-RuvB allows RuvC to scan DNA until it finds its consensus sequence, where it cleaves and resolves the cruciform DNA. The sequence is that of Crossover junction endodeoxyribonuclease RuvC from Rhodopirellula baltica (strain DSM 10527 / NCIMB 13988 / SH1).